The primary structure comprises 221 residues: 3-isopropylmalate dehydratase small subunit (221 aa).

The protein belongs to the LeuD family. LeuD type 1 subfamily. As to quaternary structure, heterodimer of LeuC and LeuD.

The enzyme catalyses (2R,3S)-3-isopropylmalate = (2S)-2-isopropylmalate. Its pathway is amino-acid biosynthesis; L-leucine biosynthesis; L-leucine from 3-methyl-2-oxobutanoate: step 2/4. Its function is as follows. Catalyzes the isomerization between 2-isopropylmalate and 3-isopropylmalate, via the formation of 2-isopropylmaleate. This is 3-isopropylmalate dehydratase small subunit from Nitrosomonas europaea (strain ATCC 19718 / CIP 103999 / KCTC 2705 / NBRC 14298).